The primary structure comprises 186 residues: Protein YABBY 2 (186 aa).

The segment at 17 to 44 (CNFCNTIFAVSVPSNSMLNIVTVRCGHC) adopts a C4-type zinc-finger fold.

The protein belongs to the YABBY family. As to expression, expressed in leaf blades, leaf sheaths and flowers.

It localises to the nucleus. The protein is Protein YABBY 2 (YAB2) of Oryza sativa subsp. japonica (Rice).